A 159-amino-acid chain; its full sequence is Large ribosomal subunit protein uL13 (159 aa).

Belongs to the universal ribosomal protein uL13 family. As to quaternary structure, part of the 50S ribosomal subunit.

Its function is as follows. This protein is one of the early assembly proteins of the 50S ribosomal subunit, although it is not seen to bind rRNA by itself. It is important during the early stages of 50S assembly. The chain is Large ribosomal subunit protein uL13 from Methanopyrus kandleri (strain AV19 / DSM 6324 / JCM 9639 / NBRC 100938).